A 516-amino-acid chain; its full sequence is Flavonoid-6-hydroxylase (516 aa).

The helical transmembrane segment at 3–23 (FNAAVCAALAFISLLSYYLIW) threads the bilayer. Cysteine 455 is a binding site for heme.

The protein belongs to the cytochrome P450 family. Heme is required as a cofactor.

The protein localises to the membrane. The enzyme catalyses genkwanin + reduced [NADPH--hemoprotein reductase] + O2 = scutellarein 7-methyl ether + oxidized [NADPH--hemoprotein reductase] + H2O. It carries out the reaction (2S)-sakuranetin + reduced [NADPH--hemoprotein reductase] + O2 = (2S)-7-methylcarthamidin + oxidized [NADPH--hemoprotein reductase] + H2O + H(+). It catalyses the reaction apigenin 4',7-dimethyl ether + reduced [NADPH--hemoprotein reductase] + O2 = ladanein + oxidized [NADPH--hemoprotein reductase] + H2O + H(+). The catalysed reaction is (2S)-naringenin 4',7-dimethyl ether + reduced [NADPH--hemoprotein reductase] + O2 = (2S)-carthamidin-4',7-dimethyl ether + oxidized [NADPH--hemoprotein reductase] + H2O + H(+). It functions in the pathway flavonoid metabolism. Functionally, 6-OH hydroxylase involved in the biosynthesis of polymethoxylated flavonoids natural products such as pebrellin, aroma compounds which contribute to the flavor of peppermint, and exhibit pharmacological activities such as anti-allergic, anti-oxidant, antibacterial, anti-proliferative, and anti-inflammatory effects. Catalyzes the 6-hydroxylation of 7-O-methylated precursors such as the conversion of genkwanin (GENK) to scutellarein-7-methyl ether (SCU7Me). Can also use apigenin-7,4'-dimethyl ether (AdM), naringenin-7-methyl ether (SAK) and naringenin-7,4'-dimethyl ether (NdM) as substrates. This Mentha piperita (Peppermint) protein is Flavonoid-6-hydroxylase.